Reading from the N-terminus, the 442-residue chain is METHLYYDTLYQYQGGVYPAHICLPTDAYLPMRVDCIESLYFRCVFFKNGMHYTEWSKLKFTVISREIKFKDVLKNADFDELFTGLVVMTIPIPIVDFHFDIDSVILKLVYPQLVHREIVLRLYDLICIRPSSDRPSEVSAKNIGIDFYQLTSQGNKQTPDEEKRCLFFQQGPLEPPSTVRGLKAAGNAKPMQFPAHVNEKMTESFLSDSWFEQKVRCKKILDFTQTYRVVVCWYELSFSREMQIENNLLSASQLKRVNAADFWDRTDRYLRDIGSRVLTHIVKTLQIHNRQFKQKFNCNFPVNFSFEHLLSFMQLGKDFWILNLTLDSCIIKAIICFLGFRNGRKSFLAQDEVWGDLIDCSKGSVIYGEKIQWILDSTNNLYSTRREKQNKSWELYVDCCALYVSEKLELDFVLPGGFAITGKFALTDGDIDFFNWRFGLS.

The protein belongs to the herpesviridae CVC1 protein family. As to quaternary structure, interacts (via C-terminus) with capsid vertex component 2/CVC2.

Its subcellular location is the virion. It is found in the host nucleus. Capsid vertex-specific component that plays a role during viral DNA encapsidation, assuring correct genome cleavage and presumably stabilizing capsids that contain full-length viral genomes. In Homo sapiens (Human), this protein is Capsid vertex component 1.